Here is a 180-residue protein sequence, read N- to C-terminus: Phosphoribosylaminoimidazole carboxylase (180 aa).

Residues S35, D38, S62, K65, G89, and S91 each coordinate substrate.

The protein belongs to the AIR carboxylase family. Class II subfamily.

The enzyme catalyses 5-amino-1-(5-phospho-D-ribosyl)imidazole-4-carboxylate + H(+) = 5-amino-1-(5-phospho-beta-D-ribosyl)imidazole + CO2. It participates in purine metabolism; IMP biosynthesis via de novo pathway; 5-amino-1-(5-phospho-D-ribosyl)imidazole-4-carboxylate from 5-amino-1-(5-phospho-D-ribosyl)imidazole (carboxylase route): step 1/1. Catalyzes the reversible conversion of 5-aminoimidazole ribonucleotide (AIR) and CO(2) to 4-carboxy-5-aminoimidazole ribonucleotide (CAIR). This Archaeoglobus fulgidus (strain ATCC 49558 / DSM 4304 / JCM 9628 / NBRC 100126 / VC-16) protein is Phosphoribosylaminoimidazole carboxylase.